A 232-amino-acid polypeptide reads, in one-letter code: Ubiquitin-conjugating enzyme E2-24 kDa (232 aa).

A compositionally biased stretch (low complexity) spans 1–37; the sequence is MSSTPAAGSAAEVATSSATSNAPSAPSTTASNVSNTS. The interval 1–87 is disordered; the sequence is MSSTPAAGSA…PRISRALGTS (87 aa). Over residues 58-67 the composition is skewed to gly residues; that stretch reads GASGSNAGGG. The UBC core domain maps to 86-232; sequence TSAKRIQKEL…ARLWTKRYAT (147 aa). Cys170 functions as the Glycyl thioester intermediate in the catalytic mechanism.

The protein belongs to the ubiquitin-conjugating enzyme family.

The catalysed reaction is S-ubiquitinyl-[E1 ubiquitin-activating enzyme]-L-cysteine + [E2 ubiquitin-conjugating enzyme]-L-cysteine = [E1 ubiquitin-activating enzyme]-L-cysteine + S-ubiquitinyl-[E2 ubiquitin-conjugating enzyme]-L-cysteine.. Its pathway is protein modification; protein ubiquitination. In terms of biological role, catalyzes the covalent attachment of ubiquitin to other proteins. In Drosophila melanogaster (Fruit fly), this protein is Ubiquitin-conjugating enzyme E2-24 kDa.